Here is a 595-residue protein sequence, read N- to C-terminus: Inactive metallocarboxypeptidase ecm14 (595 aa).

An N-terminal signal peptide occupies residues 1–22 (MYRPDHVFVILCAVFFTGQVTA). Positions 23-178 (VPAGTGITHP…MIYESQYPSR (156 aa)) are excised as a propeptide. Positions 206–527 (NYQPFPVILQ…NSVLVLGHFL (322 aa)) constitute a Peptidase M14 domain. Zn(2+)-binding residues include histidine 270 and glutamate 273. Substrate-binding positions include 270 to 273 (HARE), arginine 328, and 345 to 346 (DR). Cysteine 339 and cysteine 362 form a disulfide bridge. An N-linked (GlcNAc...) asparagine glycan is attached at asparagine 386. Residue histidine 402 coordinates Zn(2+). 403–404 (SY) serves as a coordination point for substrate.

Belongs to the peptidase M14 family. Requires Zn(2+) as cofactor.

The protein resides in the vacuole. Its subcellular location is the secreted. Its function is as follows. Inactive carboxypeptidase that may play a role in cell wall organization and biogenesis. This chain is Inactive metallocarboxypeptidase ecm14 (ecm14), found in Talaromyces marneffei (strain ATCC 18224 / CBS 334.59 / QM 7333) (Penicillium marneffei).